A 128-amino-acid polypeptide reads, in one-letter code: Aspartate 1-decarboxylase (128 aa).

Ser-25 (schiff-base intermediate with substrate; via pyruvic acid) is an active-site residue. Residue Ser-25 is modified to Pyruvic acid (Ser). Substrate is bound at residue Thr-57. Tyr-58 acts as the Proton donor in catalysis. A substrate-binding site is contributed by 73–75 (GSA).

This sequence belongs to the PanD family. Heterooctamer of four alpha and four beta subunits. It depends on pyruvate as a cofactor. Post-translationally, is synthesized initially as an inactive proenzyme, which is activated by self-cleavage at a specific serine bond to produce a beta-subunit with a hydroxyl group at its C-terminus and an alpha-subunit with a pyruvoyl group at its N-terminus.

It is found in the cytoplasm. It catalyses the reaction L-aspartate + H(+) = beta-alanine + CO2. Its pathway is cofactor biosynthesis; (R)-pantothenate biosynthesis; beta-alanine from L-aspartate: step 1/1. In terms of biological role, catalyzes the pyruvoyl-dependent decarboxylation of aspartate to produce beta-alanine. This chain is Aspartate 1-decarboxylase, found in Paraburkholderia phymatum (strain DSM 17167 / CIP 108236 / LMG 21445 / STM815) (Burkholderia phymatum).